We begin with the raw amino-acid sequence, 380 residues long: Pregnancy-associated glycoprotein 6 (380 aa).

An N-terminal signal peptide occupies residues 1–15 (MKWLVLLGLVSISEC). Residues 16–53 (IVKIPLRRVKTMRKTLSEKNMLNNFLKEHAYRLSQISF) constitute a propeptide, activation peptide. N-linked (GlcNAc...) asparagine glycans are attached at residues Asn57 and Asn74. Residues 71–377 (YLGNITIGTP…DRGHDRIGLA (307 aa)) form the Peptidase A1 domain. Asp89 is a catalytic residue. The cysteines at positions 102 and 107 are disulfide-linked. An N-linked (GlcNAc...) asparagine glycan is attached at Asn125. An intrachain disulfide couples Cys261 to Cys265. Residue Asp270 is part of the active site. Cys303 and Cys337 form a disulfide bridge.

This sequence belongs to the peptidase A1 family. In terms of tissue distribution, trophoblast and placental tissue. Produced specifically in the invasive binucleate cells of the placenta.

It localises to the secreted. It is found in the extracellular space. The polypeptide is Pregnancy-associated glycoprotein 6 (Ovis aries (Sheep)).